A 92-amino-acid chain; its full sequence is Large ribosomal subunit protein bL25 (92 aa).

The protein belongs to the bacterial ribosomal protein bL25 family. In terms of assembly, part of the 50S ribosomal subunit; part of the 5S rRNA/L5/L18/L25 subcomplex. Contacts the 5S rRNA. Binds to the 5S rRNA independently of L5 and L18.

Functionally, this is one of the proteins that binds to the 5S RNA in the ribosome where it forms part of the central protuberance. The chain is Large ribosomal subunit protein bL25 from Vibrio vulnificus (strain CMCP6).